A 282-amino-acid polypeptide reads, in one-letter code: Pantothenate synthetase (282 aa).

30 to 37 (MGYLHAGH) is a binding site for ATP. His-37 serves as the catalytic Proton donor. Gln-61 lines the (R)-pantoate pocket. Gln-61 lines the beta-alanine pocket. 147 to 150 (GKKD) provides a ligand contact to ATP. Gln-153 contributes to the (R)-pantoate binding site. ATP-binding positions include Val-176 and 184–187 (MSSR).

It belongs to the pantothenate synthetase family. In terms of assembly, homodimer.

It is found in the cytoplasm. The enzyme catalyses (R)-pantoate + beta-alanine + ATP = (R)-pantothenate + AMP + diphosphate + H(+). It functions in the pathway cofactor biosynthesis; (R)-pantothenate biosynthesis; (R)-pantothenate from (R)-pantoate and beta-alanine: step 1/1. Functionally, catalyzes the condensation of pantoate with beta-alanine in an ATP-dependent reaction via a pantoyl-adenylate intermediate. The sequence is that of Pantothenate synthetase from Geotalea uraniireducens (strain Rf4) (Geobacter uraniireducens).